The sequence spans 278 residues: Small ribosomal subunit protein uS3 (278 aa).

Residues 39–107 (LRKAISKKYV…KVQLNIVEIS (69 aa)) enclose the KH type-2 domain. The tract at residues 255 to 278 (AEIPAEEKPKRVVKKAENITKEEE) is disordered.

Belongs to the universal ribosomal protein uS3 family. As to quaternary structure, part of the 30S ribosomal subunit. Forms a tight complex with proteins S10 and S14.

Its function is as follows. Binds the lower part of the 30S subunit head. Binds mRNA in the 70S ribosome, positioning it for translation. This chain is Small ribosomal subunit protein uS3, found in Dehalococcoides mccartyi (strain CBDB1).